An 86-amino-acid chain; its full sequence is uncharacterized protein (86 aa).

Retina-specific.

This is an uncharacterized protein from Homo sapiens (Human).